A 207-amino-acid chain; its full sequence is Outer-membrane lipoprotein LolB (207 aa).

An N-terminal signal peptide occupies residues 1 to 26 (MSKLKIDTKRRFSLLIALVLIISLSS). Cys27 carries N-palmitoyl cysteine lipidation. A lipid anchor (S-diacylglycerol cysteine) is attached at Cys27.

Belongs to the LolB family. Monomer.

Its subcellular location is the cell outer membrane. Functionally, plays a critical role in the incorporation of lipoproteins in the outer membrane after they are released by the LolA protein. The sequence is that of Outer-membrane lipoprotein LolB from Francisella tularensis subsp. tularensis (strain FSC 198).